Reading from the N-terminus, the 434-residue chain is Histidinol dehydrogenase (434 aa).

NAD(+) contacts are provided by Y129, Q191, and N214. Substrate is bound by residues S240, Q262, and H265. Zn(2+) is bound by residues Q262 and H265. Residues E329 and H330 each act as proton acceptor in the active site. Substrate is bound by residues H330, D363, E417, and H422. D363 serves as a coordination point for Zn(2+). H422 provides a ligand contact to Zn(2+).

Belongs to the histidinol dehydrogenase family. It depends on Zn(2+) as a cofactor.

The enzyme catalyses L-histidinol + 2 NAD(+) + H2O = L-histidine + 2 NADH + 3 H(+). Its pathway is amino-acid biosynthesis; L-histidine biosynthesis; L-histidine from 5-phospho-alpha-D-ribose 1-diphosphate: step 9/9. Its function is as follows. Catalyzes the sequential NAD-dependent oxidations of L-histidinol to L-histidinaldehyde and then to L-histidine. The protein is Histidinol dehydrogenase of Colwellia psychrerythraea (strain 34H / ATCC BAA-681) (Vibrio psychroerythus).